The primary structure comprises 258 residues: 5'-nucleotidase SurE (258 aa).

A divalent metal cation is bound by residues Asp-9, Asp-10, Ser-42, and Asn-96.

It belongs to the SurE nucleotidase family. Requires a divalent metal cation as cofactor.

It localises to the cytoplasm. The catalysed reaction is a ribonucleoside 5'-phosphate + H2O = a ribonucleoside + phosphate. Nucleotidase that shows phosphatase activity on nucleoside 5'-monophosphates. This is 5'-nucleotidase SurE from Campylobacter jejuni subsp. doylei (strain ATCC BAA-1458 / RM4099 / 269.97).